The following is a 485-amino-acid chain: NADH-quinone oxidoreductase subunit N (485 aa).

A run of 14 helical transmembrane segments spans residues 8–28 (LIAL…MLSI), 35–55 (FLNA…LWFV), 75–95 (LYTG…YPWL), 105–125 (FYLL…ANHL), 127–147 (SLFL…GYAF), 159–179 (YTIL…LVYA), 203–223 (LLAG…LVPF), 235–255 (PAPV…GVVM), 271–291 (VVLG…ALTQ), 297–317 (LLGY…IALK), 326–346 (VGVY…VVSL), 374–394 (AVMT…GFIG), 408–427 (WWLT…YYLR), and 455–475 (VVVL…QPLI).

Belongs to the complex I subunit 2 family. NDH-1 is composed of 13 different subunits. Subunits NuoA, H, J, K, L, M, N constitute the membrane sector of the complex.

It is found in the cell inner membrane. It carries out the reaction a quinone + NADH + 5 H(+)(in) = a quinol + NAD(+) + 4 H(+)(out). Functionally, NDH-1 shuttles electrons from NADH, via FMN and iron-sulfur (Fe-S) centers, to quinones in the respiratory chain. The immediate electron acceptor for the enzyme in this species is believed to be ubiquinone. Couples the redox reaction to proton translocation (for every two electrons transferred, four hydrogen ions are translocated across the cytoplasmic membrane), and thus conserves the redox energy in a proton gradient. The polypeptide is NADH-quinone oxidoreductase subunit N (Cronobacter sakazakii (strain ATCC BAA-894) (Enterobacter sakazakii)).